Reading from the N-terminus, the 973-residue chain is Serine/threonine-protein kinase atg1 (973 aa).

The region spanning 23 to 328 (YTRLDEIGRG…FPDFFQNGVI (306 aa)) is the Protein kinase domain. ATP is bound by residues 29 to 37 (IGRGSFATV) and K52. The active-site Proton acceptor is D166. 4 disordered regions span residues 338–446 (DDLP…PGRQ), 460–482 (RQKG…DKLR), 523–587 (GNIS…QSPT), and 949–973 (PTPS…TPPK). Positions 387–407 (GLTQRPPSQNQRFGTPQTTTP) are enriched in polar residues. The span at 523–537 (GNISRGAQTGALSRR) shows a compositional bias: polar residues. Positions 566-582 (SRADSMHNRQGSYERRY) are enriched in basic and acidic residues. Polar residues predominate over residues 951-965 (PSANVPSKMASSNPV).

This sequence belongs to the protein kinase superfamily. Ser/Thr protein kinase family. APG1/unc-51/ULK1 subfamily. In terms of assembly, homodimer. Forms a ternary complex with ATG13 and ATG17.

The protein resides in the cytoplasm. Its subcellular location is the preautophagosomal structure membrane. It carries out the reaction L-seryl-[protein] + ATP = O-phospho-L-seryl-[protein] + ADP + H(+). The enzyme catalyses L-threonyl-[protein] + ATP = O-phospho-L-threonyl-[protein] + ADP + H(+). Serine/threonine protein kinase involved in the cytoplasm to vacuole transport (Cvt) and found to be essential in autophagy, where it is required for the formation of autophagosomes. Involved in the clearance of protein aggregates which cannot be efficiently cleared by the proteasome. Required for selective autophagic degradation of the nucleus (nucleophagy) as well as for mitophagy which contributes to regulate mitochondrial quantity and quality by eliminating the mitochondria to a basal level to fulfill cellular energy requirements and preventing excess ROS production. Also involved in endoplasmic reticulum-specific autophagic process, in selective removal of ER-associated degradation (ERAD) substrates. Plays a key role in ATG9 and ATG23 cycling through the pre-autophagosomal structure and is necessary to promote ATG18 binding to ATG9 through phosphorylation of ATG9. Catalyzes phosphorylation of ATG4, decreasing the interaction between ATG4 and ATG8 and impairing deconjugation of PE-conjugated forms of ATG8. This Aspergillus fumigatus (strain ATCC MYA-4609 / CBS 101355 / FGSC A1100 / Af293) (Neosartorya fumigata) protein is Serine/threonine-protein kinase atg1.